Reading from the N-terminus, the 154-residue chain is uncharacterized protein (154 aa).

This protein may be involved in virus assembly. Essential for virus function. This is an uncharacterized protein from Saccharolobus solfataricus (Sulfolobus solfataricus).